The sequence spans 198 residues: Recombination protein RecR (198 aa).

The C4-type zinc finger occupies 57–72 (CAQCRTLTEHSLCEYC). A Toprim domain is found at 80 to 175 (SLLCIVESPA…RTTRIAHGIP (96 aa)).

This sequence belongs to the RecR family.

Its function is as follows. May play a role in DNA repair. It seems to be involved in an RecBC-independent recombinational process of DNA repair. It may act with RecF and RecO. In Methylococcus capsulatus (strain ATCC 33009 / NCIMB 11132 / Bath), this protein is Recombination protein RecR.